The chain runs to 314 residues: tRNA uridine(34) hydroxylase (314 aa).

One can recognise a Rhodanese domain in the interval 140–234 (ARDDVILIDT…YLEETPPDES (95 aa)). Residue Cys-194 is the Cysteine persulfide intermediate of the active site.

It belongs to the TrhO family.

It carries out the reaction uridine(34) in tRNA + AH2 + O2 = 5-hydroxyuridine(34) in tRNA + A + H2O. In terms of biological role, catalyzes oxygen-dependent 5-hydroxyuridine (ho5U) modification at position 34 in tRNAs. The sequence is that of tRNA uridine(34) hydroxylase from Acinetobacter baumannii (strain AYE).